Consider the following 401-residue polypeptide: Argininosuccinate synthase (401 aa).

ATP-binding positions include 8–16 (AYSGGLDTS) and Ala-35. Tyr-86 and Ser-91 together coordinate L-citrulline. Residue Gly-116 coordinates ATP. Residues Thr-118, Asn-122, and Asp-123 each coordinate L-aspartate. Position 122 (Asn-122) interacts with L-citrulline. Residues Arg-126, Ser-175, Ser-184, Glu-260, and Tyr-272 each contribute to the L-citrulline site.

This sequence belongs to the argininosuccinate synthase family. Type 1 subfamily. Homotetramer.

It is found in the cytoplasm. The enzyme catalyses L-citrulline + L-aspartate + ATP = 2-(N(omega)-L-arginino)succinate + AMP + diphosphate + H(+). It participates in amino-acid biosynthesis; L-arginine biosynthesis; L-arginine from L-ornithine and carbamoyl phosphate: step 2/3. The chain is Argininosuccinate synthase from Carboxydothermus hydrogenoformans (strain ATCC BAA-161 / DSM 6008 / Z-2901).